The following is a 48-amino-acid chain: DNA-directed RNA polymerase subunit Rpo12 (48 aa).

3 residues coordinate Zn(2+): Cys9, Cys26, and Cys29.

Belongs to the archaeal Rpo12/eukaryotic RPC10 RNA polymerase subunit family. Part of the RNA polymerase complex. Zn(2+) serves as cofactor.

It localises to the cytoplasm. It carries out the reaction RNA(n) + a ribonucleoside 5'-triphosphate = RNA(n+1) + diphosphate. DNA-dependent RNA polymerase (RNAP) catalyzes the transcription of DNA into RNA using the four ribonucleoside triphosphates as substrates. This is DNA-directed RNA polymerase subunit Rpo12 from Sulfurisphaera tokodaii (strain DSM 16993 / JCM 10545 / NBRC 100140 / 7) (Sulfolobus tokodaii).